A 467-amino-acid chain; its full sequence is Trigger factor (467 aa).

Residues 162-243 enclose the PPIase FKBP-type domain; it reads GDFVSIDLSA…LNSVKERHLP (82 aa). Residues 426–435 show a composition bias toward acidic residues; it reads EEGNELDLDE. Residues 426 to 467 form a disordered region; the sequence is EEGNELDLDELFGTQAGEEQGEQAEGTEATDEQSAKADAKAE. The segment covering 436–452 has biased composition (low complexity); that stretch reads LFGTQAGEEQGEQAEGT. Over residues 458–467 the composition is skewed to basic and acidic residues; sequence QSAKADAKAE.

The protein belongs to the FKBP-type PPIase family. Tig subfamily.

The protein resides in the cytoplasm. It catalyses the reaction [protein]-peptidylproline (omega=180) = [protein]-peptidylproline (omega=0). Involved in protein export. Acts as a chaperone by maintaining the newly synthesized protein in an open conformation. Functions as a peptidyl-prolyl cis-trans isomerase. The protein is Trigger factor of Saccharopolyspora erythraea (strain ATCC 11635 / DSM 40517 / JCM 4748 / NBRC 13426 / NCIMB 8594 / NRRL 2338).